Reading from the N-terminus, the 449-residue chain is Putative tartrate transporter (449 aa).

11 helical membrane-spanning segments follow: residues 34 to 54 (IVPFIMLLYFIAFLDRVNIGF), 64 to 84 (GFSSTVFGIGAGIFFVGYFLF), 99 to 119 (IWIARVMITWGIVSGLMAFVQ), 130 to 150 (LLGVAEAGFFPGIILYLSFWF), 156 to 176 (AAVTALFMAAAPLSTVLGSPI), 194 to 214 (WMFLIEAAPALILGVVVLFFL), 259 to 279 (VIALALVYFGTSAGLYTLGIW), 292 to 312 (IEVGFINAVPGIFAVVAMVLW), 336 to 356 (GLAFAAGATSVFMVLIALTIV), 367 to 387 (LWSMPTMFLSGPAAAAGIATI), and 414 to 434 (GGLYFVAGLLLISAILTLILA).

The protein belongs to the major facilitator superfamily. Phthalate permease family.

It is found in the cell membrane. Functionally, component of the tartrate utilization system and may allow entry of tartrate and tartrate dehydrogenase. This Agrobacterium vitis (Rhizobium vitis) protein is Putative tartrate transporter (ttuB).